Here is a 490-residue protein sequence, read N- to C-terminus: Cytochrome P450 71A25 (490 aa).

A helical membrane pass occupies residues M1 to K21. C431 provides a ligand contact to heme.

It belongs to the cytochrome P450 family. It depends on heme as a cofactor.

The protein localises to the membrane. The chain is Cytochrome P450 71A25 (CYP71A25) from Arabidopsis thaliana (Mouse-ear cress).